Reading from the N-terminus, the 242-residue chain is Putative S-adenosyl-L-methionine-dependent methyltransferase Mmcs_0580 (242 aa).

S-adenosyl-L-methionine contacts are provided by residues Asp-104 and Asp-134 to Leu-135.

Belongs to the UPF0677 family.

In terms of biological role, exhibits S-adenosyl-L-methionine-dependent methyltransferase activity. The protein is Putative S-adenosyl-L-methionine-dependent methyltransferase Mmcs_0580 of Mycobacterium sp. (strain MCS).